Reading from the N-terminus, the 470-residue chain is Mucin-like protein 3 (470 aa).

The N-terminal stretch at 1-29 is a signal peptide; sequence MAQMTSGLYPMFGFFICLLFLPASWEAGA. Residues 30–401 lie on the Extracellular side of the membrane; sequence NTFQELQKTG…EGSNSFPAWA (372 aa). 2 disordered regions span residues 57–234 and 248–318; these read RALS…HTIP and TKEA…KAPE. Over residues 75–87 the composition is skewed to polar residues; sequence STATQKPKRQCNT. An N-linked (GlcNAc...) asparagine glycan is attached at Asn-122. The segment covering 132 to 152 has biased composition (basic and acidic residues); sequence ARNERSADDHGSTNSEKRSDG. Residues 169–193 are compositionally biased toward polar residues; the sequence is TRTSGTPVSSTETSTKLRTTSQKPE. Basic and acidic residues predominate over residues 194 to 203; the sequence is TSSHDSDLIR. Residues 204-222 show a composition bias toward polar residues; that stretch reads KSTSLPVKSTEVSRTSYRT. The span at 260-273 shows a compositional bias: basic and acidic residues; it reads KYERETRSASERIS. A compositionally biased stretch (polar residues) spans 283–295; sequence HTPSAGETTTQVS. An N-linked (GlcNAc...) asparagine glycan is attached at Asn-325. The chain crosses the membrane as a helical span at residues 402–422; the sequence is IVVVILMAVIILLIFLGLIFL. The Cytoplasmic segment spans residues 423 to 470; sequence VSCASRARHQLTQNSEDAEPEDKGGRNSYPVYLMEQQNLNLNQISSPP.

Its subcellular location is the cell membrane. The protein resides in the cytoplasm. In terms of biological role, may modulate NF-kappaB signaling and play a role in cell growth. The polypeptide is Mucin-like protein 3 (Rattus norvegicus (Rat)).